Consider the following 199-residue polypeptide: Protein extra-macrochaetae (199 aa).

The region spanning 23–75 is the bHLH domain; it reads RIQRHPTHRGDGENAEMKMYLSKLKDLVPFMPKNRKLTKLEIIQHVIDYICDL. The residue at position 106 (Ser-106) is a Phosphoserine. The segment at 127–199 is disordered; the sequence is RLNAEQPAKV…QNAEKDSRQS (73 aa). The segment covering 161 to 182 has biased composition (low complexity); it reads QQHQQQQQLQLQQQQLQSQQQL.

As to quaternary structure, heterodimer with other HLH proteins.

It localises to the nucleus. Participates in sensory organ patterning by antagonizing the neurogenic activity of the Achaete-scute complex (AS-C). It lacks a basic DNA-binding domain but is able to form heterodimers with other HLH proteins, thereby inhibiting DNA binding. May sequester proneural proteins in complexes inefficient for DNA interaction. EMC also affects vein differentiation. Inhibits the activity of AS-C proteins by forming an non-DNA binding heterodimer. The polypeptide is Protein extra-macrochaetae (emc) (Drosophila melanogaster (Fruit fly)).